Consider the following 357-residue polypeptide: Elongation factor Ts (357 aa).

The tract at residues 82-85 (TDFV) is involved in Mg(2+) ion dislocation from EF-Tu.

It belongs to the EF-Ts family.

Its subcellular location is the cytoplasm. Associates with the EF-Tu.GDP complex and induces the exchange of GDP to GTP. It remains bound to the aminoacyl-tRNA.EF-Tu.GTP complex up to the GTP hydrolysis stage on the ribosome. This is Elongation factor Ts from Campylobacter jejuni subsp. jejuni serotype O:23/36 (strain 81-176).